A 288-amino-acid chain; its full sequence is Probable ketoamine kinase VV1_2562 (288 aa).

92-94 lines the ATP pocket; the sequence is NFL. Asp-195 (proton acceptor) is an active-site residue.

This sequence belongs to the fructosamine kinase family.

Functionally, ketoamine kinase that phosphorylates ketoamines on the third carbon of the sugar moiety to generate ketoamine 3-phosphate. The chain is Probable ketoamine kinase VV1_2562 from Vibrio vulnificus (strain CMCP6).